The following is a 247-amino-acid chain: Sec-independent protein translocase protein TatC (247 aa).

5 helical membrane-spanning segments follow: residues 21–41 (IILLSFFLAFFVGLFVSKPLI), 71–91 (AFIIGLILVFPVILYQLWAFV), 109–129 (ITFLLFLCGVVFSYVITFPFI), 154–174 (FLLQIVLSFGVLFELPMVIML), and 195–215 (FCLLIIAAFIAPPEILSHLMI).

This sequence belongs to the TatC family. As to quaternary structure, forms a complex with TatA.

The protein localises to the cell membrane. Part of the twin-arginine translocation (Tat) system that transports large folded proteins containing a characteristic twin-arginine motif in their signal peptide across membranes. This Listeria innocua serovar 6a (strain ATCC BAA-680 / CLIP 11262) protein is Sec-independent protein translocase protein TatC.